The following is a 71-amino-acid chain: Peptide Ctri10261 (71 aa).

A signal peptide spans 1–23; sequence MKIPLILVTIAIILLMVPTESDA. Residue Phe-37 is modified to Phenylalanine amide. The propeptide occupies 41–71; the sequence is SLKNRDYFDYMQDPSLSNADLRELEELLEDY.

This sequence belongs to the non-disulfide-bridged peptide (NDBP) superfamily. Short antimicrobial peptide (group 4) family. Expressed by the venom gland.

It localises to the secreted. Antimicrobial peptide. The chain is Peptide Ctri10261 from Chaerilus tricostatus (Scorpion).